Reading from the N-terminus, the 288-residue chain is UTP--glucose-1-phosphate uridylyltransferase (288 aa).

This sequence belongs to the UDPGP type 2 family.

The catalysed reaction is alpha-D-glucose 1-phosphate + UTP + H(+) = UDP-alpha-D-glucose + diphosphate. It functions in the pathway glycolipid metabolism; diglucosyl-diacylglycerol biosynthesis. Catalyzes the formation of UDP-glucose from glucose-1-phosphate and UTP. This is an intermediate step in the biosynthesis of diglucosyl-diacylglycerol (Glc2-DAG), i.e. the predominant glycolipid found in the S.aureus membrane, which is also used as a membrane anchor for lipoteichoic acid (LTA). This is UTP--glucose-1-phosphate uridylyltransferase (gtaB) from Staphylococcus aureus (strain MSSA476).